The chain runs to 364 residues: UDP-N-acetylglucosamine--N-acetylmuramyl-(pentapeptide) pyrophosphoryl-undecaprenol N-acetylglucosamine transferase (364 aa).

UDP-N-acetyl-alpha-D-glucosamine contacts are provided by residues 10–12 (TGG), N128, R170, S199, I250, and Q295.

It belongs to the glycosyltransferase 28 family. MurG subfamily.

The protein resides in the cell inner membrane. The catalysed reaction is di-trans,octa-cis-undecaprenyl diphospho-N-acetyl-alpha-D-muramoyl-L-alanyl-D-glutamyl-meso-2,6-diaminopimeloyl-D-alanyl-D-alanine + UDP-N-acetyl-alpha-D-glucosamine = di-trans,octa-cis-undecaprenyl diphospho-[N-acetyl-alpha-D-glucosaminyl-(1-&gt;4)]-N-acetyl-alpha-D-muramoyl-L-alanyl-D-glutamyl-meso-2,6-diaminopimeloyl-D-alanyl-D-alanine + UDP + H(+). Its pathway is cell wall biogenesis; peptidoglycan biosynthesis. In terms of biological role, cell wall formation. Catalyzes the transfer of a GlcNAc subunit on undecaprenyl-pyrophosphoryl-MurNAc-pentapeptide (lipid intermediate I) to form undecaprenyl-pyrophosphoryl-MurNAc-(pentapeptide)GlcNAc (lipid intermediate II). This is UDP-N-acetylglucosamine--N-acetylmuramyl-(pentapeptide) pyrophosphoryl-undecaprenol N-acetylglucosamine transferase from Chlorobium limicola (strain DSM 245 / NBRC 103803 / 6330).